The sequence spans 143 residues: Holo-[acyl-carrier-protein] synthase (143 aa).

The Mg(2+) site is built by Asp9 and Glu63.

This sequence belongs to the P-Pant transferase superfamily. AcpS family. It depends on Mg(2+) as a cofactor.

Its subcellular location is the cytoplasm. It carries out the reaction apo-[ACP] + CoA = holo-[ACP] + adenosine 3',5'-bisphosphate + H(+). Transfers the 4'-phosphopantetheine moiety from coenzyme A to a Ser of acyl-carrier-protein. This chain is Holo-[acyl-carrier-protein] synthase, found in Burkholderia pseudomallei (strain 1106a).